The following is a 294-amino-acid chain: GTPase Era (294 aa).

One can recognise an Era-type G domain in the interval 3–170; it reads KSGFISIIGR…LELMIKYMPE (168 aa). The tract at residues 11 to 18 is G1; that stretch reads GRPNVGKS. Residue 11–18 participates in GTP binding; sequence GRPNVGKS. Residues 37–41 are G2; the sequence is QTTRN. Positions 58–61 are G3; sequence DTPG. GTP-binding positions include 58-62 and 120-123; these read DTPGI and NKID. Positions 120-123 are G4; it reads NKID. Residues 149–151 are G5; the sequence is ISA. Residues 201-278 enclose the KH type-2 domain; sequence LSEEVPHGIA…NLKVWVKVKK (78 aa).

The protein belongs to the TRAFAC class TrmE-Era-EngA-EngB-Septin-like GTPase superfamily. Era GTPase family. As to quaternary structure, monomer.

Its subcellular location is the cytoplasm. The protein resides in the cell membrane. In terms of biological role, an essential GTPase that binds both GDP and GTP, with rapid nucleotide exchange. Plays a role in 16S rRNA processing and 30S ribosomal subunit biogenesis and possibly also in cell cycle regulation and energy metabolism. In Clostridium novyi (strain NT), this protein is GTPase Era.